Reading from the N-terminus, the 367-residue chain is Mitogen-activated protein kinase 12 (367 aa).

A Protein kinase domain is found at 27 to 311; the sequence is YQDLQPVGSG…AAEALAHPYF (285 aa). ATP contacts are provided by residues 33-41 and Lys56; that span reads VGSGAYGAV. The active-site Proton acceptor is the Asp153. Residue Thr183 is modified to Phosphothreonine; by MAP2K3 and MAP2K6. Positions 183 to 185 match the TXY motif; sequence TGY. Tyr185 bears the Phosphotyrosine; by MAP2K3 and MAP2K6 mark.

Belongs to the protein kinase superfamily. CMGC Ser/Thr protein kinase family. MAP kinase subfamily. As to quaternary structure, monomer. Interacts with the PDZ domain of the syntrophin SNTA1. Interacts with LIN7C, SCRIB, SYNJ2BP and SH3BP5. Interacts with PTPN4; this interaction induces the activation of PTPN4 phosphatase activity. Mg(2+) serves as cofactor. Post-translationally, dually phosphorylated on Thr-183 and Tyr-185 by MAP2K3/MKK3 and MAP2K6/MKK6, which activates the enzyme. Ubiquitinated. Ubiquitination leads to degradation by the proteasome pathway. In terms of tissue distribution, highly expressed in skeletal muscle, lung and testes and also in the heart and thymus of both adult and neonatal rats.

Its subcellular location is the cytoplasm. The protein localises to the nucleus. It is found in the mitochondrion. The catalysed reaction is L-seryl-[protein] + ATP = O-phospho-L-seryl-[protein] + ADP + H(+). The enzyme catalyses L-threonyl-[protein] + ATP = O-phospho-L-threonyl-[protein] + ADP + H(+). With respect to regulation, activated by phosphorylation on threonine and tyrosine. MAP2K3/MKK3 and MAP2K6/MKK6 are both essential for the activation of MAPK12 induced by environmental stress, whereas MAP2K6/MKK6 is the major MAPK12 activator in response to TNF-alpha. In terms of biological role, serine/threonine kinase which acts as an essential component of the MAP kinase signal transduction pathway. MAPK12 is one of the four p38 MAPKs which play an important role in the cascades of cellular responses evoked by extracellular stimuli such as pro-inflammatory cytokines or physical stress leading to direct activation of transcription factors such as ELK1 and ATF2. Accordingly, p38 MAPKs phosphorylate a broad range of proteins and it has been estimated that they may have approximately 200 to 300 substrates each. Some of the targets are downstream kinases such as MAPKAPK2, which are activated through phosphorylation and further phosphorylate additional targets. Plays a role in myoblast differentiation and also in the down-regulation of cyclin D1 in response to hypoxia in adrenal cells suggesting MAPK12 may inhibit cell proliferation while promoting differentiation. Phosphorylates DLG1. Following osmotic shock, MAPK12 in the cell nucleus increases its association with nuclear DLG1, thereby causing dissociation of DLG1-SFPQ complexes. This function is independent of its catalytic activity and could affect mRNA processing and/or gene transcription to aid cell adaptation to osmolarity changes in the environment. Regulates UV-induced checkpoint signaling and repair of UV-induced DNA damage and G2 arrest after gamma-radiation exposure. MAPK12 is involved in the regulation of SLC2A1 expression and basal glucose uptake in L6 myotubes; and negatively regulates SLC2A4 expression and contraction-mediated glucose uptake in adult skeletal muscle. C-Jun (JUN) phosphorylation is stimulated by MAPK14 and inhibited by MAPK12, leading to a distinct AP-1 regulation. MAPK12 is required for the normal kinetochore localization of PLK1, prevents chromosomal instability and supports mitotic cell viability. MAPK12-signaling is also positively regulating the expansion of transient amplifying myogenic precursor cells during muscle growth and regeneration. This Rattus norvegicus (Rat) protein is Mitogen-activated protein kinase 12 (Mapk12).